The primary structure comprises 198 residues: MFSGIIQEVARVDLIHHYGDSMEIGIFARNLVDGVPGSSIAVDGICLTLVKREFELLFFDVTEETMACTTIKNYTVGSMVNLERSVRLGDEIGGHFVSGHVCGVGTIIAVEKSYMFFKAPTNLVPYVLEKGFIAIDGISLTIAQVRGDIFSVSVIPETRARTSLGYKQVGSHVNMEPDMMTKMQVDTVMRFQAEKIGK.

Lumazine-binding repeat units follow at residues 1 to 95 and 96 to 188; these read MFSG…IGGH and FVSG…VDTV. 2,4-dihydroxypteridine is bound by residues 4–6, 46–48, 60–65, 99–101, lysine 130, 139–141, and 153–158; these read GII, CLT, DVTEET, GHV, SLT, and SVIPET.

As to quaternary structure, homotrimer.

The catalysed reaction is 2 6,7-dimethyl-8-(1-D-ribityl)lumazine + H(+) = 5-amino-6-(D-ribitylamino)uracil + riboflavin. The protein operates within cofactor biosynthesis; riboflavin biosynthesis; riboflavin from 2-hydroxy-3-oxobutyl phosphate and 5-amino-6-(D-ribitylamino)uracil: step 2/2. Functionally, catalyzes the dismutation of two molecules of 6,7-dimethyl-8-ribityllumazine, resulting in the formation of riboflavin and 5-amino-6-(D-ribitylamino)uracil. The polypeptide is Riboflavin synthase (ribE) (Chlamydia muridarum (strain MoPn / Nigg)).